We begin with the raw amino-acid sequence, 63 residues long: Sperm protamine P1 (63 aa).

Residues 1–47 (MARCRRHIRSRSRSRNQCQRRRRRSHYNRRRTYRRSRRHSRRRRVRR) are disordered.

The protein belongs to the protamine P1 family. Testis.

The protein localises to the nucleus. The protein resides in the chromosome. Its function is as follows. Protamines substitute for histones in the chromatin of sperm during the haploid phase of spermatogenesis. They compact sperm DNA into a highly condensed, stable and inactive complex. The polypeptide is Sperm protamine P1 (PRM1) (Planigale tenuirostris (Narrow-nosed planigale)).